The sequence spans 115 residues: Holo-[acyl-carrier-protein] synthase (115 aa).

The Mg(2+) site is built by aspartate 6 and glutamate 51.

Belongs to the P-Pant transferase superfamily. AcpS family. The cofactor is Mg(2+).

The protein localises to the cytoplasm. The enzyme catalyses apo-[ACP] + CoA = holo-[ACP] + adenosine 3',5'-bisphosphate + H(+). In terms of biological role, transfers the 4'-phosphopantetheine moiety from coenzyme A to a Ser of acyl-carrier-protein. This chain is Holo-[acyl-carrier-protein] synthase, found in Campylobacter jejuni (strain RM1221).